Reading from the N-terminus, the 388-residue chain is 8-amino-7-oxononanoate synthase (388 aa).

R23 is a binding site for substrate. 110–111 (GF) lines the pyridoxal 5'-phosphate pocket. H135 is a binding site for substrate. Pyridoxal 5'-phosphate contacts are provided by S181, H209, and T235. The residue at position 238 (K238) is an N6-(pyridoxal phosphate)lysine. T352 provides a ligand contact to substrate.

Belongs to the class-II pyridoxal-phosphate-dependent aminotransferase family. BioF subfamily. Homodimer. It depends on pyridoxal 5'-phosphate as a cofactor.

It catalyses the reaction 6-carboxyhexanoyl-[ACP] + L-alanine + H(+) = (8S)-8-amino-7-oxononanoate + holo-[ACP] + CO2. Its pathway is cofactor biosynthesis; biotin biosynthesis. Catalyzes the decarboxylative condensation of pimeloyl-[acyl-carrier protein] and L-alanine to produce 8-amino-7-oxononanoate (AON), [acyl-carrier protein], and carbon dioxide. This Sodalis glossinidius (strain morsitans) protein is 8-amino-7-oxononanoate synthase.